The chain runs to 314 residues: Ribosomal RNA small subunit methyltransferase H (314 aa).

S-adenosyl-L-methionine contacts are provided by residues 32–34, aspartate 52, phenylalanine 79, aspartate 100, and glutamine 107; that span reads GGH.

The protein belongs to the methyltransferase superfamily. RsmH family.

The protein localises to the cytoplasm. It catalyses the reaction cytidine(1402) in 16S rRNA + S-adenosyl-L-methionine = N(4)-methylcytidine(1402) in 16S rRNA + S-adenosyl-L-homocysteine + H(+). In terms of biological role, specifically methylates the N4 position of cytidine in position 1402 (C1402) of 16S rRNA. The chain is Ribosomal RNA small subunit methyltransferase H from Shouchella clausii (strain KSM-K16) (Alkalihalobacillus clausii).